The sequence spans 158 residues: uncharacterized protein (158 aa).

2 helical membrane-spanning segments follow: residues 10–30 and 137–157; these read LSSLAAIIFAQVIKVPIQFIV and IEVFFGGLTGILLTLVLAYFF.

The protein resides in the cell membrane. This is an uncharacterized protein from Bacillus subtilis (strain 168).